A 62-amino-acid polypeptide reads, in one-letter code: UPF0291 protein CLJ_B2839 (62 aa).

It belongs to the UPF0291 family.

The protein localises to the cytoplasm. In Clostridium botulinum (strain 657 / Type Ba4), this protein is UPF0291 protein CLJ_B2839.